Here is a 203-residue protein sequence, read N- to C-terminus: V-type ATP synthase subunit D (203 aa).

This sequence belongs to the V-ATPase D subunit family.

In terms of biological role, produces ATP from ADP in the presence of a proton gradient across the membrane. This is V-type ATP synthase subunit D from Streptococcus pneumoniae (strain CGSP14).